A 375-amino-acid chain; its full sequence is MPLIDMPEFAGELLEEFAARRTSRVNTPVIQPAEPFLDMAGEDLRRRIFMTESETGESLCLRPEFTIPVCLRHIETATGTPKRYSYLGEVFRQRREGASEFYQAGIEDLGDTDIAAADARVVIDATAILQRLLPGRSLAVTLGDQQVFEAVVAALGLPLGWQKRLVQAFGDMAQLDALLESLVHPKPMTGLDARVAGLLATGDEAVLVDYLDTVMQETGYSTNASRSPLEIARRLREKLALAATRLPDESFELLKQFLALQAPLPQASQVLGDFAARAKLKLDGALSAFDKRVAALANAGVDLETVTYGAAFGRPLDYYTGLVFEVVEAGSDSVLAGGGRYDRLLTLLGAQEKIPAVGFSLWLDRIKAVRGSDKP.

The protein belongs to the class-II aminoacyl-tRNA synthetase family. HisZ subfamily. As to quaternary structure, heteromultimer composed of HisG and HisZ subunits.

It is found in the cytoplasm. It participates in amino-acid biosynthesis; L-histidine biosynthesis; L-histidine from 5-phospho-alpha-D-ribose 1-diphosphate: step 1/9. Functionally, required for the first step of histidine biosynthesis. May allow the feedback regulation of ATP phosphoribosyltransferase activity by histidine. This chain is ATP phosphoribosyltransferase regulatory subunit, found in Agrobacterium fabrum (strain C58 / ATCC 33970) (Agrobacterium tumefaciens (strain C58)).